Reading from the N-terminus, the 215-residue chain is N-(5'-phosphoribosyl)anthranilate isomerase (215 aa).

Belongs to the TrpF family.

It catalyses the reaction N-(5-phospho-beta-D-ribosyl)anthranilate = 1-(2-carboxyphenylamino)-1-deoxy-D-ribulose 5-phosphate. The protein operates within amino-acid biosynthesis; L-tryptophan biosynthesis; L-tryptophan from chorismate: step 3/5. The polypeptide is N-(5'-phosphoribosyl)anthranilate isomerase (Rippkaea orientalis (strain PCC 8801 / RF-1) (Cyanothece sp. (strain PCC 8801))).